A 911-amino-acid chain; its full sequence is Chitin synthase G (911 aa).

Disordered regions lie at residues 1 to 66 and 107 to 138; these read MAYQ…VSGY and GRVA…GGLR. Over residues 12 to 34 the composition is skewed to basic and acidic residues; it reads PHYDDNGHRLQDLPHGSYEEEAS. The span at 54–66 shows a compositional bias: polar residues; the sequence is QHGSSTTRPVSGY. A run of 6 helical transmembrane segments spans residues 579 to 599, 624 to 644, 659 to 679, 711 to 731, 840 to 860, and 879 to 899; these read IFST…TTVI, IINT…FILA, SFVV…YLVV, IIII…FMYL, LVTF…SDGV, and ALLW…CWFL.

It belongs to the chitin synthase family. Class III subfamily.

The protein resides in the cell membrane. The catalysed reaction is [(1-&gt;4)-N-acetyl-beta-D-glucosaminyl](n) + UDP-N-acetyl-alpha-D-glucosamine = [(1-&gt;4)-N-acetyl-beta-D-glucosaminyl](n+1) + UDP + H(+). Its function is as follows. Polymerizes chitin, a structural polymer of the cell wall and septum, by transferring the sugar moiety of UDP-GlcNAc to the non-reducing end of the growing chitin polymer. This chain is Chitin synthase G (chsG), found in Aspergillus fumigatus (strain ATCC MYA-4609 / CBS 101355 / FGSC A1100 / Af293) (Neosartorya fumigata).